A 369-amino-acid polypeptide reads, in one-letter code: DNA replication and repair protein RecF (369 aa).

30-37 (GDNAQGKT) is an ATP binding site.

It belongs to the RecF family.

The protein resides in the cytoplasm. Functionally, the RecF protein is involved in DNA metabolism; it is required for DNA replication and normal SOS inducibility. RecF binds preferentially to single-stranded, linear DNA. It also seems to bind ATP. The protein is DNA replication and repair protein RecF of Streptococcus equi subsp. zooepidemicus (strain H70).